The following is a 311-amino-acid chain: Probable protein phosphatase 2C 59 (311 aa).

The segment covering 1–14 (MGYLNSVLSSSSQV) has biased composition (low complexity). Residues 1-26 (MGYLNSVLSSSSQVHSDDGPVSGGGL) form a disordered region. The 247-residue stretch at 33–279 (SYGYASSPGK…DNITCVVVRF (247 aa)) folds into the PPM-type phosphatase domain. Mn(2+)-binding residues include D69, G70, D231, and D270.

It belongs to the PP2C family. As to quaternary structure, interacts with the Pseudomonas syringae pv. maculicola effector HopW1-1 (via C-terminus). The cofactor is Mg(2+). Mn(2+) is required as a cofactor.

It carries out the reaction O-phospho-L-seryl-[protein] + H2O = L-seryl-[protein] + phosphate. The catalysed reaction is O-phospho-L-threonyl-[protein] + H2O = L-threonyl-[protein] + phosphate. Its activity is regulated as follows. Inhibited by sodium fluoride (NaF). Functionally, protein phosphatase that modulates defense response to pathogenic bacteria, conferring resistance and promoting salicylic acid (SA) accumulation. This chain is Probable protein phosphatase 2C 59 (WIN2), found in Arabidopsis thaliana (Mouse-ear cress).